A 182-amino-acid polypeptide reads, in one-letter code: Keratin, type II cytoskeletal 68 kDa, component IA (182 aa).

The 66-residue stretch at 1 to 66 (DAEQHGEVAL…TLLEGEECRM (66 aa)) folds into the IF rod domain. Residues 1-66 (DAEQHGEVAL…TLLEGEECRM (66 aa)) form a coil 2B region. The segment at 67–86 (SGECQSSVSIEMVHNTTSSS) is H2 subdomain. The tail stretch occupies residues 67 to 182 (SGECQSSVSI…SQSQRSHHKL (116 aa)). A V2 subdomain region spans residues 87–162 (SGGSGALGGG…GSCAVSGVGG (76 aa)). Residues 104–124 (GSGGLGSGSLGSGRLGSGGRG) are compositionally biased toward gly residues. Residues 104 to 182 (GSGGLGSGSL…SQSQRSHHKL (79 aa)) are disordered. Composition is skewed to low complexity over residues 144–158 (VRGS…CAVS) and 165–176 (SVRVTQSSSQSQ). The tract at residues 163 to 182 (RGSVRVTQSSSQSQRSHHKL) is E2 subdomain.

It belongs to the intermediate filament family. Heterotetramer of two type I and two type II keratins.

The polypeptide is Keratin, type II cytoskeletal 68 kDa, component IA (Bos taurus (Bovine)).